A 212-amino-acid polypeptide reads, in one-letter code: Large ribosomal subunit protein uL1 (212 aa).

It belongs to the universal ribosomal protein uL1 family. In terms of assembly, part of the 50S ribosomal subunit.

Functionally, binds directly to 23S rRNA. Probably involved in E site tRNA release. In terms of biological role, protein L1 is also a translational repressor protein, it controls the translation of its operon by binding to its mRNA. This chain is Large ribosomal subunit protein uL1, found in Haloquadratum walsbyi (strain DSM 16790 / HBSQ001).